The primary structure comprises 499 residues: Glycerol kinase 2 (499 aa).

ADP is bound at residue T13. Positions 13, 14, and 15 each coordinate ATP. T13 provides a ligand contact to sn-glycerol 3-phosphate. Position 17 (R17) interacts with ADP. R83, E84, Y134, and D241 together coordinate sn-glycerol 3-phosphate. Glycerol is bound by residues R83, E84, Y134, D241, and Q242. T263 and G306 together coordinate ADP. ATP contacts are provided by T263, G306, Q310, and G407. G407 contributes to the ADP binding site.

It belongs to the FGGY kinase family.

It carries out the reaction glycerol + ATP = sn-glycerol 3-phosphate + ADP + H(+). The protein operates within polyol metabolism; glycerol degradation via glycerol kinase pathway; sn-glycerol 3-phosphate from glycerol: step 1/1. Key enzyme in the regulation of glycerol uptake and metabolism. Catalyzes the phosphorylation of glycerol to yield sn-glycerol 3-phosphate. The sequence is that of Glycerol kinase 2 from Saccharolobus solfataricus (strain ATCC 35092 / DSM 1617 / JCM 11322 / P2) (Sulfolobus solfataricus).